Here is a 178-residue protein sequence, read N- to C-terminus: dCTP deaminase, dUMP-forming (178 aa).

Residues 96 to 101 (RSSLGR), Asp-113, 121 to 123 (TLE), Gln-142, Tyr-156, and Gln-163 each bind dCTP. Glu-123 serves as the catalytic Proton donor/acceptor.

The protein belongs to the dCTP deaminase family. Homotrimer.

It catalyses the reaction dCTP + 2 H2O = dUMP + NH4(+) + diphosphate. The protein operates within pyrimidine metabolism; dUMP biosynthesis; dUMP from dCTP: step 1/1. Its function is as follows. Bifunctional enzyme that catalyzes both the deamination of dCTP to dUTP and the hydrolysis of dUTP to dUMP without releasing the toxic dUTP intermediate. In Acetivibrio thermocellus (strain ATCC 27405 / DSM 1237 / JCM 9322 / NBRC 103400 / NCIMB 10682 / NRRL B-4536 / VPI 7372) (Clostridium thermocellum), this protein is dCTP deaminase, dUMP-forming.